Consider the following 1782-residue polypeptide: MKLFVLAAIIAAVSSDRFSSQSQSTGGQTYPSPWQVGKQYRYEVTSRTLAHLQEGPSSGSAFKAQFTIRVKSPGRLQAKLENPQHGNFNEQLPDPRELPVDLKYQPTPNIDKVFEIEIDGGRIVSLDFPTSVPVPQENLIKGLISALQLDTSAHRVIHDSQNNYDREQQQGLFRKMETDVTGDCETLYTVSPVASEWRRELPKFANEQDPVEVTKSTNYGHCHHRVAYHFGVPVGAEWTGTAHKTQEQQLIGRATYSRILTGKEGPIYKAETTSTVHVHPHLYGKQKAEVYSHVHMELISVDQDSGAEWPRAGAMRPAQSILYSLSTKQMTKHYESSSSSSSSESHEFNFPEQHEHPHQSNQRSRRSYMRSKLVTVHKVLKKRNSESSSGSSSSSADSSSTYINDDIPDIDEPAYAALYMSPQPHADKKQNAMNAQKILQDIAQQLQNPNNMPKSDFLSKFNILVRLIASMSTEQLSQTSRSIETAKTSNNIIKSDMWMIFRDGVTQAGTLPAFKQIQSWIENKKIQEEEAAQVVVALPRTLRYPTKQIMTQFFNFARSPAVKDQMFLNSSALMAATKLINLGQVNNYTAHSYYPTHMYGRLTHKHDAFVLEEILPTLAADLKATVEYKDSTKAQVYIQAIGNLGHREILKVFAPYLEGKVEISTYLRTHIVKNLKTLAKLRDRHVRAVLFSILRNTAEPYPVRVAAIQSIFISHPTGEMMQAMAEMTHNDPSVEVRAVLKSAILSAAELQHPRNFYLSRTAQAARYLVTNEEFGYQHSFKFIDDSYDEDNDIGTFVISHIGSEDSLLPKDFKIVTNSKGGAWERNTIEASFSSAERFLDYLRDSVFAPHPKFDRAHKYSAEKIAKLLNIKNDEEEPLEASFYVDFMNNQRLFSFSESDLQQLSQYISEYMKKVESGAEKHYTKVYNQDQVSIMFPVASGMPFIFKYKEPAVIHFQSKLKGKFSFPSKDNKYYEANMIKDVQFTYAINIDGNVGFMDTLSNQYSSVGVVNKLQFNIPFKFGIEIKSGLIKFRVEPLHPDQDQTLVHYSVWPYSASQKKDSLVAISQDPATKIVERRSKVFSVDSKYGQSTHAVIYAQGYTYSSDWRNFGAKFTSRDYFTNLASLLTQEDIALTHFNLKHLCKQSQSKALTITAYYDEYYNQQNSGILTDATDRNDLSPNSETRRAEMVKLVSAGINKARVRVVDLSASFEGSQDQNYVLTGTWGDSPVDSKVQGMLFAGTKSATQGNQQINAVFATTKPEIHSLSFSKPLQSDLRAPFGMHFKYGQSGEIRVSGSFDRTKKYTTELENHPLAKQCSQQTTLNNFYQDSCHKAIVMAHAPDHVEFSVSFQDMSPQYRNFSYHTYRLYEYLGYWYTEANPLKLTQNGKMDFKIDFSYFDRTYTVDIASPSGEARMRDMPIATMAPGALSFYQPLKAYELVANYFTGHQYQPYCSIDGTRIHTFSNRSYEYPLSRSWHVVMQDESTQRGNWHELAILSRRQQRDQQEIYISYKSESGQDLEIEIQPASGDSAYQVKVTTNTKKITDDDLTMYWDDVKEQPFLQYHTHKDGVLVINIEDDRIRAIYDGQRFVVFTQDYRNSTRGICGRMSGEQRDDYLTPEGLVDKPELYAAAYSLNEENSDPKTQELKALATQQAYYPEYKYTSILRSDPTWQEESQSCGEDQWQSETVYKSRSYDKHKGACEVRQQVQFYENHGDICITTSRVPSCQSHCRAGDYKIQHVQVTCKSKLDHDFRMYKEQIKKGQNPEVSGIPSVKQFKVPVTCQP.

The signal sequence occupies residues 1-15 (MKLFVLAAIIAAVSS). In terms of domain architecture, Vitellogenin spans 34 to 812 (WQVGKQYRYE…SEDSLLPKDF (779 aa)). Disordered stretches follow at residues 333–367 (HYESSSSSSSSESHEFNFPEQHEHPHQSNQRSRRS) and 379–406 (VLKKRNSESSSGSSSSSADSSSTYINDD). A compositionally biased stretch (basic and acidic residues) spans 344–358 (ESHEFNFPEQHEHPH). The segment covering 386–400 (ESSSGSSSSSADSSS) has biased composition (low complexity). N-linked (GlcNAc...) asparagine glycans are attached at residues asparagine 569, asparagine 587, asparagine 1357, asparagine 1463, and asparagine 1596. In terms of domain architecture, VWFD spans 1449–1638 (PYCSIDGTRI…AYSLNEENSD (190 aa)). Cysteine 1451 and cysteine 1602 are oxidised to a cystine.

Heterotetramer of two heavy and two light chains. Glycosylated and phosphorylated. As to expression, detected in oocytes (at protein level). Produced by the fat body, where it is cleaved before being secreted into hemolymph. Sequestered then by a single class of receptor mediated endocytosis in the ovary.

It is found in the secreted. It localises to the cytoplasm. The protein resides in the cytoplasmic granule. Functionally, precursor of the egg-yolk proteins that are sources of nutrients during embryonic development. The protein is Vitellogenin (VG) of Bombyx mori (Silk moth).